The following is a 471-amino-acid chain: Mitochondrial distribution and morphology protein 10 (471 aa).

3 disordered regions span residues 272 to 291, 374 to 394, and 436 to 455; these read TEMP…SNHG, ADTP…DEEN, and SWAA…GGVS. Positions 276–288 are enriched in low complexity; the sequence is SSSSSTSSTTTTS. The segment covering 444-455 has biased composition (gly residues); the sequence is AGGGQSVGGGVS.

This sequence belongs to the MDM10 family. Component of the ER-mitochondria encounter structure (ERMES) or MDM complex, composed of mmm1, mdm10, mdm12 and mdm34. Associates with the mitochondrial outer membrane sorting assembly machinery SAM(core) complex.

The protein localises to the mitochondrion outer membrane. Its function is as follows. Component of the ERMES/MDM complex, which serves as a molecular tether to connect the endoplasmic reticulum and mitochondria. Components of this complex are involved in the control of mitochondrial shape and protein biogenesis and may function in phospholipid exchange. mdm10 is involved in the late assembly steps of the general translocase of the mitochondrial outer membrane (TOM complex). Functions in the tom40-specific route of the assembly of outer membrane beta-barrel proteins, including the association of tom40 with the receptor tom22 and small TOM proteins. Can associate with the SAM(core) complex as well as the mdm12-mmm1 complex, both involved in late steps of the major beta-barrel assembly pathway, that is responsible for biogenesis of all outer membrane beta-barrel proteins. May act as a switch that shuttles between both complexes and channels precursor proteins into the tom40-specific pathway. Plays a role in mitochondrial morphology and in the inheritance of mitochondria. The chain is Mitochondrial distribution and morphology protein 10 (mdmB) from Neosartorya fischeri (strain ATCC 1020 / DSM 3700 / CBS 544.65 / FGSC A1164 / JCM 1740 / NRRL 181 / WB 181) (Aspergillus fischerianus).